The primary structure comprises 284 residues: L-ribulose-5-phosphate 3-epimerase UlaE (284 aa).

This sequence belongs to the L-ribulose-5-phosphate 3-epimerase family.

The catalysed reaction is L-ribulose 5-phosphate = L-xylulose 5-phosphate. It functions in the pathway cofactor degradation; L-ascorbate degradation; D-xylulose 5-phosphate from L-ascorbate: step 3/4. Its function is as follows. Catalyzes the isomerization of L-xylulose-5-phosphate to L-ribulose-5-phosphate. Is involved in the anaerobic L-ascorbate utilization. In Escherichia coli O157:H7 (strain EC4115 / EHEC), this protein is L-ribulose-5-phosphate 3-epimerase UlaE.